The primary structure comprises 37 residues: Photosystem II reaction center protein M (37 aa).

Residues 7–27 (GFIAVLMFLAIPTAFLLIPYV) form a helical membrane-spanning segment.

The protein belongs to the PsbM family. In terms of assembly, PSII is composed of 1 copy each of membrane proteins PsbA, PsbB, PsbC, PsbD, PsbE, PsbF, PsbH, PsbI, PsbJ, PsbK, PsbL, PsbM, PsbT, PsbX, PsbY, PsbZ, Psb30/Ycf12, at least 3 peripheral proteins of the oxygen-evolving complex and a large number of cofactors. It forms dimeric complexes.

The protein localises to the plastid. It localises to the chloroplast thylakoid membrane. Functionally, one of the components of the core complex of photosystem II (PSII). PSII is a light-driven water:plastoquinone oxidoreductase that uses light energy to abstract electrons from H(2)O, generating O(2) and a proton gradient subsequently used for ATP formation. It consists of a core antenna complex that captures photons, and an electron transfer chain that converts photonic excitation into a charge separation. This subunit is found at the monomer-monomer interface. The sequence is that of Photosystem II reaction center protein M from Pinus koraiensis (Korean pine).